Here is a 227-residue protein sequence, read N- to C-terminus: Cytochrome c oxidase subunit 2 (227 aa).

The Mitochondrial intermembrane portion of the chain corresponds to M1–S14. The chain crosses the membrane as a helical span at residues P15–M45. Residues L46–Q59 are Mitochondrial matrix-facing. Residues E60–M87 traverse the membrane as a helical segment. Residues D88–T227 lie on the Mitochondrial intermembrane side of the membrane. Cu cation is bound by residues H161, C196, E198, C200, H204, and M207. Mg(2+) is bound at residue E198.

This sequence belongs to the cytochrome c oxidase subunit 2 family. As to quaternary structure, component of the cytochrome c oxidase (complex IV, CIV), a multisubunit enzyme composed of 14 subunits. The complex is composed of a catalytic core of 3 subunits MT-CO1, MT-CO2 and MT-CO3, encoded in the mitochondrial DNA, and 11 supernumerary subunits COX4I, COX5A, COX5B, COX6A, COX6B, COX6C, COX7A, COX7B, COX7C, COX8 and NDUFA4, which are encoded in the nuclear genome. The complex exists as a monomer or a dimer and forms supercomplexes (SCs) in the inner mitochondrial membrane with NADH-ubiquinone oxidoreductase (complex I, CI) and ubiquinol-cytochrome c oxidoreductase (cytochrome b-c1 complex, complex III, CIII), resulting in different assemblies (supercomplex SCI(1)III(2)IV(1) and megacomplex MCI(2)III(2)IV(2)). Found in a complex with TMEM177, COA6, COX18, COX20, SCO1 and SCO2. Interacts with TMEM177 in a COX20-dependent manner. Interacts with COX20. Interacts with COX16. Requires Cu cation as cofactor.

Its subcellular location is the mitochondrion inner membrane. It catalyses the reaction 4 Fe(II)-[cytochrome c] + O2 + 8 H(+)(in) = 4 Fe(III)-[cytochrome c] + 2 H2O + 4 H(+)(out). In terms of biological role, component of the cytochrome c oxidase, the last enzyme in the mitochondrial electron transport chain which drives oxidative phosphorylation. The respiratory chain contains 3 multisubunit complexes succinate dehydrogenase (complex II, CII), ubiquinol-cytochrome c oxidoreductase (cytochrome b-c1 complex, complex III, CIII) and cytochrome c oxidase (complex IV, CIV), that cooperate to transfer electrons derived from NADH and succinate to molecular oxygen, creating an electrochemical gradient over the inner membrane that drives transmembrane transport and the ATP synthase. Cytochrome c oxidase is the component of the respiratory chain that catalyzes the reduction of oxygen to water. Electrons originating from reduced cytochrome c in the intermembrane space (IMS) are transferred via the dinuclear copper A center (CU(A)) of subunit 2 and heme A of subunit 1 to the active site in subunit 1, a binuclear center (BNC) formed by heme A3 and copper B (CU(B)). The BNC reduces molecular oxygen to 2 water molecules using 4 electrons from cytochrome c in the IMS and 4 protons from the mitochondrial matrix. In Cratogeomys castanops (Yellow-faced pocket gopher), this protein is Cytochrome c oxidase subunit 2 (MT-CO2).